The primary structure comprises 309 residues: Mitochondrial import receptor subunit TOM34 (309 aa).

Residue Ser-8 is modified to Phosphoserine. 3 TPR repeats span residues 9–42 (VEQL…LQAR), 51–84 (SVLY…VPFS), and 85–118 (IKPL…DNSV). The segment at 158–189 (WNSLPSDNHKETAKTKSKEATATKSRVPSAGD) is disordered. Ser-160 is modified (phosphoserine). The segment covering 164-178 (DNHKETAKTKSKEAT) has biased composition (basic and acidic residues). Ser-186 is subject to Phosphoserine. TPR repeat units lie at residues 193–226 (AKAL…SSLE), 227–260 (SATY…DGKN), and 261–294 (VKAF…EPRN). Lys-197 participates in a covalent cross-link: Glycyl lysine isopeptide (Lys-Gly) (interchain with G-Cter in SUMO2).

This sequence belongs to the Tom34 family. As to quaternary structure, interacts with HSP90A, VCP, ATP6V1D, KIAA0665, AMPK, and DMAP1 through its TPR repeat. In terms of tissue distribution, isoform 1 is ubiquitously expressed while isoform 2 is expressed only in mature testicular germ cells. Isoform 1 is expressed in all testicular cells. Isoform 2 is highly expressed in early to late pachytene cells but expression is significantly decreased in round spermatid cells.

The protein resides in the cytoplasm. The protein localises to the mitochondrion outer membrane. Functionally, plays a role in the import of cytosolically synthesized preproteins into mitochondria. Binds the mature portion of precursor proteins. Interacts with cellular components, and possesses weak ATPase activity. May be a chaperone-like protein that helps to keep newly synthesized precursors in an unfolded import compatible state. This Mus musculus (Mouse) protein is Mitochondrial import receptor subunit TOM34 (Tomm34).